The chain runs to 37 residues: Conotoxin r11e (37 aa).

Disulfide bonds link cysteine 2–cysteine 16, cysteine 9–cysteine 21, cysteine 15–cysteine 26, and cysteine 20–cysteine 33. 4-carboxyglutamate is present on residues glutamate 13 and glutamate 14. At tryptophan 34 the chain carries 6'-bromotryptophan.

As to expression, expressed by the venom duct.

The protein localises to the secreted. Causes hyperactivity, circular motion, convulsion, urination and death, when injected into 13- to 15-day-old mice. Causes gasping, backward swimming or swimming in a vertical direction and death, when intraperitoneally injected into goldfish. The protein is Conotoxin r11e of Conus radiatus (Rayed cone).